The sequence spans 545 residues: Chaperonin GroEL (545 aa).

ATP contacts are provided by residues 29–32 (TMGP), Lys-50, 86–90 (DGTTT), Gly-414, 477–479 (DAA), and Asp-493.

This sequence belongs to the chaperonin (HSP60) family. Forms a cylinder of 14 subunits composed of two heptameric rings stacked back-to-back. Interacts with the co-chaperonin GroES.

It is found in the cytoplasm. The enzyme catalyses ATP + H2O + a folded polypeptide = ADP + phosphate + an unfolded polypeptide.. Together with its co-chaperonin GroES, plays an essential role in assisting protein folding. The GroEL-GroES system forms a nano-cage that allows encapsulation of the non-native substrate proteins and provides a physical environment optimized to promote and accelerate protein folding. This Campylobacter jejuni subsp. jejuni serotype O:2 (strain ATCC 700819 / NCTC 11168) protein is Chaperonin GroEL.